An 870-amino-acid chain; its full sequence is Valine--tRNA ligase (870 aa).

The 'HIGH' region motif lies at 42–52; it reads PNVTGVLHIGH. Residues 527 to 531 carry the 'KMSKS' region motif; the sequence is KMSKS. Position 530 (lysine 530) interacts with ATP. Positions 800 to 870 form a coiled coil; the sequence is LENVDLSGIL…ISVELQNLRG (71 aa).

The protein belongs to the class-I aminoacyl-tRNA synthetase family. ValS type 1 subfamily. As to quaternary structure, monomer.

The protein localises to the cytoplasm. The catalysed reaction is tRNA(Val) + L-valine + ATP = L-valyl-tRNA(Val) + AMP + diphosphate. In terms of biological role, catalyzes the attachment of valine to tRNA(Val). As ValRS can inadvertently accommodate and process structurally similar amino acids such as threonine, to avoid such errors, it has a 'posttransfer' editing activity that hydrolyzes mischarged Thr-tRNA(Val) in a tRNA-dependent manner. The chain is Valine--tRNA ligase from Campylobacter jejuni (strain RM1221).